The primary structure comprises 213 residues: Orotate phosphoribosyltransferase (213 aa).

Lysine 26 contacts 5-phospho-alpha-D-ribose 1-diphosphate. 34–35 (FF) provides a ligand contact to orotate. 5-phospho-alpha-D-ribose 1-diphosphate contacts are provided by residues 72 to 73 (YK), arginine 99, lysine 100, lysine 103, histidine 105, and 124 to 132 (DDVITAGTA). The orotate site is built by threonine 128 and arginine 156.

It belongs to the purine/pyrimidine phosphoribosyltransferase family. PyrE subfamily. In terms of assembly, homodimer. Requires Mg(2+) as cofactor.

It catalyses the reaction orotidine 5'-phosphate + diphosphate = orotate + 5-phospho-alpha-D-ribose 1-diphosphate. The protein operates within pyrimidine metabolism; UMP biosynthesis via de novo pathway; UMP from orotate: step 1/2. Its function is as follows. Catalyzes the transfer of a ribosyl phosphate group from 5-phosphoribose 1-diphosphate to orotate, leading to the formation of orotidine monophosphate (OMP). This is Orotate phosphoribosyltransferase from Aliivibrio fischeri (strain MJ11) (Vibrio fischeri).